Reading from the N-terminus, the 88-residue chain is MRLFLSLPVLVVVLAMVLEGPAPTQAAPEISSTLGRIPEKLKEFGNTLEDKARAAVESIKQSDIPAKTRNWFSETFNKVKEQLKTAFS.

An N-terminal signal peptide occupies residues M1–A26.

The protein belongs to the apolipoprotein C1 family.

The protein localises to the secreted. In terms of biological role, inhibitor of lipoprotein binding to the low density lipoprotein (LDL) receptor, LDL receptor-related protein, and very low density lipoprotein (VLDL) receptor. Associates with high density lipoproteins (HDL) and the triacylglycerol-rich lipoproteins in the plasma and makes up about 10% of the protein of the VLDL and 2% of that of HDL. Appears to interfere directly with fatty acid uptake and is also the major plasma inhibitor of cholesteryl ester transfer protein (CETP). Binds free fatty acids and reduces their intracellular esterification. Modulates the interaction of APOE with beta-migrating VLDL and inhibits binding of beta-VLDL to the LDL receptor-related protein. In Mirounga angustirostris (Northern elephant seal), this protein is Apolipoprotein C-I (APOC1).